The primary structure comprises 648 residues: DNA helicase/primase complex-associated protein (648 aa).

Positions Leu43–Thr63 are disordered.

Belongs to the herpesviridae HEPA family. In terms of assembly, associates with the primase and the helicase to form the helicase-primase complex. Interacts with the origin-binding protein. Interacts with the polymerase catalytic subunit.

It is found in the host nucleus. In terms of biological role, component of the helicase/primase complex. Unwinds the DNA at the replication forks and generates single-stranded DNA for both leading and lagging strand synthesis. The primase synthesizes short RNA primers on the lagging strand that the polymerase presumably elongates using dNTPs. The primase-associated factor has no known catalytic activity in the complex and may serve to facilitate the formation of the replisome by directly interacting with the origin-binding protein and the polymerase. This is DNA helicase/primase complex-associated protein (UL8) from Amazona oratrix (yellow-headed parrot).